Reading from the N-terminus, the 304-residue chain is Small ribosomal subunit biogenesis GTPase RsgA (304 aa).

Residues 78–237 enclose the CP-type G domain; sequence VSFLTRPPVA…VADTPGFNRP (160 aa). GTP-binding positions include 127 to 130 and 179 to 187; these read TKTD and GPSGVGKSS. Cys262, Cys267, His269, and Cys275 together coordinate Zn(2+).

The protein belongs to the TRAFAC class YlqF/YawG GTPase family. RsgA subfamily. Monomer. Associates with 30S ribosomal subunit, binds 16S rRNA. Zn(2+) is required as a cofactor.

It localises to the cytoplasm. One of several proteins that assist in the late maturation steps of the functional core of the 30S ribosomal subunit. Helps release RbfA from mature subunits. May play a role in the assembly of ribosomal proteins into the subunit. Circularly permuted GTPase that catalyzes slow GTP hydrolysis, GTPase activity is stimulated by the 30S ribosomal subunit. This Synechococcus sp. (strain CC9311) protein is Small ribosomal subunit biogenesis GTPase RsgA.